Here is a 473-residue protein sequence, read N- to C-terminus: Aspartyl/glutamyl-tRNA(Asn/Gln) amidotransferase subunit B (473 aa).

It belongs to the GatB/GatE family. GatB subfamily. Heterotrimer of A, B and C subunits.

The catalysed reaction is L-glutamyl-tRNA(Gln) + L-glutamine + ATP + H2O = L-glutaminyl-tRNA(Gln) + L-glutamate + ADP + phosphate + H(+). It catalyses the reaction L-aspartyl-tRNA(Asn) + L-glutamine + ATP + H2O = L-asparaginyl-tRNA(Asn) + L-glutamate + ADP + phosphate + 2 H(+). Functionally, allows the formation of correctly charged Asn-tRNA(Asn) or Gln-tRNA(Gln) through the transamidation of misacylated Asp-tRNA(Asn) or Glu-tRNA(Gln) in organisms which lack either or both of asparaginyl-tRNA or glutaminyl-tRNA synthetases. The reaction takes place in the presence of glutamine and ATP through an activated phospho-Asp-tRNA(Asn) or phospho-Glu-tRNA(Gln). The polypeptide is Aspartyl/glutamyl-tRNA(Asn/Gln) amidotransferase subunit B (Finegoldia magna (strain ATCC 29328 / DSM 20472 / WAL 2508) (Peptostreptococcus magnus)).